A 420-amino-acid chain; its full sequence is L-cysteine:1D-myo-inositol 2-amino-2-deoxy-alpha-D-glucopyranoside ligase (420 aa).

C43 contributes to the Zn(2+) binding site. Residues 43-46 (CGIT), T58, and 81-83 (NIT) contribute to the L-cysteinyl-5'-AMP site. Positions 45-55 (ITPYDATHLGH) match the 'HIGH' region motif. The short motif at 187–192 (ERGGDP) is the 'ERGGDP' region element. L-cysteinyl-5'-AMP is bound at residue W227. Zn(2+) is bound at residue C231. Residue 249–251 (GSD) coordinates L-cysteinyl-5'-AMP. Position 256 (H256) interacts with Zn(2+). I289 provides a ligand contact to L-cysteinyl-5'-AMP. Residues 295–299 (KMSKS) carry the 'KMSKS' region motif.

This sequence belongs to the class-I aminoacyl-tRNA synthetase family. MshC subfamily. In terms of assembly, monomer. It depends on Zn(2+) as a cofactor.

The enzyme catalyses 1D-myo-inositol 2-amino-2-deoxy-alpha-D-glucopyranoside + L-cysteine + ATP = 1D-myo-inositol 2-(L-cysteinylamino)-2-deoxy-alpha-D-glucopyranoside + AMP + diphosphate + H(+). Its function is as follows. Catalyzes the ATP-dependent condensation of GlcN-Ins and L-cysteine to form L-Cys-GlcN-Ins. The chain is L-cysteine:1D-myo-inositol 2-amino-2-deoxy-alpha-D-glucopyranoside ligase from Segniliparus rotundus (strain ATCC BAA-972 / CDC 1076 / CIP 108378 / DSM 44985 / JCM 13578).